We begin with the raw amino-acid sequence, 530 residues long: Glutamate--cysteine ligase (530 aa).

Belongs to the glutamate--cysteine ligase type 1 family. Type 1 subfamily.

The enzyme catalyses L-cysteine + L-glutamate + ATP = gamma-L-glutamyl-L-cysteine + ADP + phosphate + H(+). It functions in the pathway sulfur metabolism; glutathione biosynthesis; glutathione from L-cysteine and L-glutamate: step 1/2. The polypeptide is Glutamate--cysteine ligase (Pseudomonas entomophila (strain L48)).